The following is a 121-amino-acid chain: Small ribosomal subunit protein uS13 (121 aa).

Positions 97–121 (VRGQRTRTNARTRRGARKTVAGRKK) are disordered. Positions 100–121 (QRTRTNARTRRGARKTVAGRKK) are enriched in basic residues.

Belongs to the universal ribosomal protein uS13 family. In terms of assembly, part of the 30S ribosomal subunit. Forms a loose heterodimer with protein S19. Forms two bridges to the 50S subunit in the 70S ribosome.

Its function is as follows. Located at the top of the head of the 30S subunit, it contacts several helices of the 16S rRNA. In the 70S ribosome it contacts the 23S rRNA (bridge B1a) and protein L5 of the 50S subunit (bridge B1b), connecting the 2 subunits; these bridges are implicated in subunit movement. Contacts the tRNAs in the A and P-sites. This chain is Small ribosomal subunit protein uS13, found in Prochlorococcus marinus (strain NATL1A).